The following is an 87-amino-acid chain: Small ribosomal subunit protein bS18 (87 aa).

This sequence belongs to the bacterial ribosomal protein bS18 family. In terms of assembly, part of the 30S ribosomal subunit. Forms a tight heterodimer with protein bS6.

Binds as a heterodimer with protein bS6 to the central domain of the 16S rRNA, where it helps stabilize the platform of the 30S subunit. The sequence is that of Small ribosomal subunit protein bS18 from Nitratidesulfovibrio vulgaris (strain DSM 19637 / Miyazaki F) (Desulfovibrio vulgaris).